We begin with the raw amino-acid sequence, 415 residues long: Homoserine O-succinyltransferase (415 aa).

Residues 69–383 (NAVLVCHALN…PHGHDAFLLD (315 aa)) enclose the AB hydrolase-1 domain. The Nucleophile role is filled by Ser175. Substrate is bound at residue Arg245. Active-site residues include Asp344 and His377. A substrate-binding site is contributed by Asp378.

The protein belongs to the AB hydrolase superfamily. MetX family. Homodimer.

Its subcellular location is the cytoplasm. The enzyme catalyses L-homoserine + succinyl-CoA = O-succinyl-L-homoserine + CoA. Its pathway is amino-acid biosynthesis; L-methionine biosynthesis via de novo pathway; O-succinyl-L-homoserine from L-homoserine: step 1/1. In terms of biological role, transfers a succinyl group from succinyl-CoA to L-homoserine, forming succinyl-L-homoserine. The chain is Homoserine O-succinyltransferase from Bordetella pertussis (strain Tohama I / ATCC BAA-589 / NCTC 13251).